The following is a 1761-amino-acid chain: Nonribosomal peptide synthetase 6 (1761 aa).

The interval 63–468 is adenylation; it reads ERAALHPEKI…GRQDQQVKLR (406 aa). A Carrier 1 domain is found at 600–675; it reads EATTEMELKL…SMAEKAKPVS (76 aa). Ser636 carries the post-translational modification O-(pantetheine 4'-phosphoryl)serine. The interval 712–1135 is condensation 1; the sequence is VEDVYPCTPL…AVLDPVEAQD (424 aa). Carrier domains follow at residues 1169 to 1242 and 1237 to 1313; these read SPNE…SNER and SASN…EEET. An O-(pantetheine 4'-phosphoryl)serine mark is found at Ser1203 and Ser1274. Residues 1354 to 1677 are condensation 2; that stretch reads IYPTRPLQQL…ESVQWFDTVV (324 aa).

The protein belongs to the NRP synthetase family.

Its pathway is siderophore biosynthesis. Nonribosomal peptide synthetase; part of the gene cluster that mediates the biosynthesis of hydroxamate-containing siderophores that play a critical role in virulence. Cochliobolus heterostrophus produces extracellular coprogen-type siderophores including coprogen, neocoprogen I and neocoprogen II, as well as the intracellular siderophore ferricrocin. The role of extracellular siderophores is to supply iron to the fungus during plant infection, and the intracellular ferricrocin is required for intracellular iron distribution and storage with a crucial role in ascus and ascospore development. SIDA2 catalyzes the conversion of L-ornithine to N(5)-hydroxyornithine, the first step in the biosynthesis of all hydroxamate-containing siderophores. The assembly of extracellular coprogen-type siderophores is then performed by the nonribosomal peptide synthetase (NRPS) NPS6 whereas the intracellular siderophore ferricrocin is assembled by NPS2. The polypeptide is Nonribosomal peptide synthetase 6 (Cochliobolus heterostrophus (strain C4 / ATCC 48331 / race T) (Southern corn leaf blight fungus)).